Here is a 362-residue protein sequence, read N- to C-terminus: MGFSGIWLNLYVVFGSLMVFERMVVMVVMKAQPLVPAIFIFGDSVVDVGNNNDIYTIVKANFPPYGRDFTTHTPTGRFCNGKLATDFTAENLGFKSYPQAYLSKKAKGKNLLIGANFASAASGYYDGTAKLYSAISLPQQLEHYKDYISRIQEIATSNNNSNASAIISNGIYIVSAGSSDFIQNYYINPLLYRDQSPDEFSDLLILSYSSFIQNLYSLGARRIGVTTLPPLGCLPAAITVVGPHEGGCSEKLNNDAISFNNKLNTTSQDLKRNLIGLNLVVFDIYQPLYDLATRPSEFGFAEARRACCGTGLLETSILCNPKSVGTCNNATEYVFWDGFHPTEAANKILADNLLVSGISLIS.

The N-terminal stretch at methionine 1–valine 28 is a signal peptide. Serine 44 serves as the catalytic Nucleophile. N-linked (GlcNAc...) asparagine glycans are attached at residues asparagine 159, asparagine 162, asparagine 264, and asparagine 329. Catalysis depends on residues aspartate 337 and histidine 340.

This sequence belongs to the 'GDSL' lipolytic enzyme family.

The protein resides in the secreted. The sequence is that of GDSL esterase/lipase At5g22810 from Arabidopsis thaliana (Mouse-ear cress).